Reading from the N-terminus, the 218-residue chain is GTP cyclohydrolase 1 (218 aa).

C109, H112, and C180 together coordinate Zn(2+).

It belongs to the GTP cyclohydrolase I family. In terms of assembly, toroid-shaped homodecamer, composed of two pentamers of five dimers.

The enzyme catalyses GTP + H2O = 7,8-dihydroneopterin 3'-triphosphate + formate + H(+). The protein operates within cofactor biosynthesis; 7,8-dihydroneopterin triphosphate biosynthesis; 7,8-dihydroneopterin triphosphate from GTP: step 1/1. This chain is GTP cyclohydrolase 1, found in Aeromonas hydrophila subsp. hydrophila (strain ATCC 7966 / DSM 30187 / BCRC 13018 / CCUG 14551 / JCM 1027 / KCTC 2358 / NCIMB 9240 / NCTC 8049).